The primary structure comprises 155 residues: Small ribosomal subunit protein uS7c (155 aa).

It belongs to the universal ribosomal protein uS7 family. In terms of assembly, part of the 30S ribosomal subunit.

The protein resides in the plastid. It is found in the chloroplast. One of the primary rRNA binding proteins, it binds directly to 16S rRNA where it nucleates assembly of the head domain of the 30S subunit. This Stewartia pseudocamellia (Japanese stewartia) protein is Small ribosomal subunit protein uS7c (rps7).